The following is a 459-amino-acid chain: Exodeoxyribonuclease 7 large subunit (459 aa).

This sequence belongs to the XseA family. In terms of assembly, heterooligomer composed of large and small subunits.

Its subcellular location is the cytoplasm. It carries out the reaction Exonucleolytic cleavage in either 5'- to 3'- or 3'- to 5'-direction to yield nucleoside 5'-phosphates.. In terms of biological role, bidirectionally degrades single-stranded DNA into large acid-insoluble oligonucleotides, which are then degraded further into small acid-soluble oligonucleotides. In Pseudomonas aeruginosa (strain ATCC 15692 / DSM 22644 / CIP 104116 / JCM 14847 / LMG 12228 / 1C / PRS 101 / PAO1), this protein is Exodeoxyribonuclease 7 large subunit.